A 375-amino-acid polypeptide reads, in one-letter code: ORC1-type DNA replication protein 3 (375 aa).

ATP contacts are provided by residues 66 to 70 (TGKTT), tyrosine 209, and arginine 221.

The protein belongs to the CDC6/cdc18 family.

Involved in regulation of DNA replication. The polypeptide is ORC1-type DNA replication protein 3 (cdc6c) (Haloarcula marismortui (strain ATCC 43049 / DSM 3752 / JCM 8966 / VKM B-1809) (Halobacterium marismortui)).